A 231-amino-acid polypeptide reads, in one-letter code: Enolase-phosphatase E1 (231 aa).

This sequence belongs to the HAD-like hydrolase superfamily. MasA/MtnC family. In terms of assembly, monomer. The cofactor is Mg(2+).

The catalysed reaction is 5-methylsulfanyl-2,3-dioxopentyl phosphate + H2O = 1,2-dihydroxy-5-(methylsulfanyl)pent-1-en-3-one + phosphate. Its pathway is amino-acid biosynthesis; L-methionine biosynthesis via salvage pathway; L-methionine from S-methyl-5-thio-alpha-D-ribose 1-phosphate: step 3/6. It functions in the pathway amino-acid biosynthesis; L-methionine biosynthesis via salvage pathway; L-methionine from S-methyl-5-thio-alpha-D-ribose 1-phosphate: step 4/6. In terms of biological role, bifunctional enzyme that catalyzes the enolization of 2,3-diketo-5-methylthiopentyl-1-phosphate (DK-MTP-1-P) into the intermediate 2-hydroxy-3-keto-5-methylthiopentenyl-1-phosphate (HK-MTPenyl-1-P), which is then dephosphorylated to form the acireductone 1,2-dihydroxy-3-keto-5-methylthiopentene (DHK-MTPene). This Stenotrophomonas maltophilia (strain K279a) protein is Enolase-phosphatase E1.